Reading from the N-terminus, the 309-residue chain is Serine/threonine-protein phosphatase 2A catalytic subunit beta isoform (309 aa).

Mn(2+)-binding residues include D57, H59, D85, and N117. H118 (proton donor) is an active-site residue. Residues H167 and H241 each coordinate Mn(2+). Position 307 is a phosphotyrosine (Y307). At L309 the chain carries Leucine methyl ester.

It belongs to the PPP phosphatase family. PP-1 subfamily. In terms of assembly, PP2A consists of a common heterodimeric core enzyme (composed of a 36 kDa catalytic subunit (subunit C) and a 65 kDa constant regulatory subunit (PR65) (subunit A)) that associates with a variety of regulatory subunits. Proteins that associate with the core dimer include three families of regulatory subunits B (the R2/B/PR55/B55, R3/B''/PR72/PR130/PR59 and R5/B'/B56 families), the 48 kDa variable regulatory subunit, viral proteins, and cell signaling molecules. Binds PPME1. May indirectly interact with SGO1, most probably through regulatory B56 subunits. Interacts with CTTNBP2NL. Interacts with PTPA. Found in a complex with at least ARL2, PPP2CB, PPP2R1A, PPP2R2A, PPP2R5E and TBCD. Interacts with TBCD. Part of the core of STRIPAK complexes composed of PP2A catalytic and scaffolding subunits, the striatins (PP2A regulatory subunits), the striatin-associated proteins MOB4, STRIP1 and STRIP2, PDCD10 and members of the STE20 kinases, such as STK24 and STK26. The cofactor is Mn(2+). Reversibly methyl esterified on Leu-309 by leucine carboxyl methyltransferase 1 (Lcmt1) and protein phosphatase methylesterase 1 (Ppme1). Carboxyl methylation influences the affinity of the catalytic subunit for the different regulatory subunits, thereby modulating the PP2A holoenzyme's substrate specificity, enzyme activity and cellular localization. Post-translationally, phosphorylation of either threonine (by autophosphorylation-activated protein kinase) or tyrosine results in inactivation of the phosphatase. Auto-dephosphorylation has been suggested as a mechanism for reactivation. In terms of processing, may be monoubiquitinated by NOSIP.

It is found in the cytoplasm. The protein resides in the nucleus. It localises to the chromosome. The protein localises to the centromere. Its subcellular location is the cytoskeleton. It is found in the spindle pole. The catalysed reaction is O-phospho-L-seryl-[protein] + H2O = L-seryl-[protein] + phosphate. It catalyses the reaction O-phospho-L-threonyl-[protein] + H2O = L-threonyl-[protein] + phosphate. Its function is as follows. Catalytic subunit of protein phosphatase 2A (PP2A), a serine/threonine phosphatase involved in the regulation of a wide variety of enzymes, signal transduction pathways, and cellular events. PP2A can modulate the activity of phosphorylase B kinase, casein kinase 2, mitogen-stimulated S6 kinase, and MAP-2 kinase. Part of the striatin-interacting phosphatase and kinase (STRIPAK) complexes. STRIPAK complexes have critical roles in protein (de)phosphorylation and are regulators of multiple signaling pathways including Hippo, MAPK, nuclear receptor and cytoskeleton remodeling. Different types of STRIPAK complexes are involved in a variety of biological processes such as cell growth, differentiation, apoptosis, metabolism and immune regulation. This Mus musculus (Mouse) protein is Serine/threonine-protein phosphatase 2A catalytic subunit beta isoform (Ppp2cb).